We begin with the raw amino-acid sequence, 290 residues long: Glycine-N-acyltransferase-like protein 3 (290 aa).

It catalyses the reaction an acyl-CoA + glycine = an N-acylglycine + CoA + H(+). It carries out the reaction (9Z)-octadecenoyl-CoA + glycine = N-(9Z-octadecenoyl)glycine + CoA + H(+). The catalysed reaction is hexadecanoyl-CoA + glycine = N-hexadecanoylglycine + CoA + H(+). The protein operates within lipid metabolism. Functionally, catalyzes the conjugation of long-chain fatty acyl-CoA thioester and glycine to produce long-chain N-(fatty acyl)glycine, an intermediate in the primary fatty acid amide biosynthetic pathway. This chain is Glycine-N-acyltransferase-like protein 3, found in Mus musculus (Mouse).